The sequence spans 195 residues: CASP-like protein 1E2 (195 aa).

The Cytoplasmic portion of the chain corresponds to 1-29; sequence MEVESKTSFGGMESKSKEVKVVTGGKLRP. A helical transmembrane segment spans residues 30-50; that stretch reads FDLVLRVVALALTLVAAVLLG. The Extracellular portion of the chain corresponds to 51–82; it reads VDKQTKVVSLQLLPTLPPMDVPVTAKWRYLSA. Residues 83-103 traverse the membrane as a helical segment; that stretch reads FVYFVVSNAIACSYAALSLLL. Residues 104 to 122 lie on the Cytoplasmic side of the membrane; sequence SVGNSKGNKGLGLAITVMD. Residues 123–143 traverse the membrane as a helical segment; the sequence is LVMVALLFSSNGAAGAIGLMG. At 144–165 the chain is on the extracellular side; the sequence is YEGNSRVRWGKVCNVFGKFCNQ. A helical transmembrane segment spans residues 166-186; sequence VAVALGLSFFGGLAFFLLVVM. The Cytoplasmic portion of the chain corresponds to 187–195; the sequence is AAFALNKRH.

Belongs to the Casparian strip membrane proteins (CASP) family. As to quaternary structure, homodimer and heterodimers.

The protein resides in the cell membrane. The polypeptide is CASP-like protein 1E2 (Vitis vinifera (Grape)).